We begin with the raw amino-acid sequence, 329 residues long: Cysteine synthase (329 aa).

Lys-48 is subject to N6-(pyridoxal phosphate)lysine. Pyridoxal 5'-phosphate is bound by residues Asn-78, 183 to 187, and Ser-278; that span reads GTGGT.

It belongs to the cysteine synthase/cystathionine beta-synthase family. In terms of assembly, homodimer. The cofactor is pyridoxal 5'-phosphate.

It catalyses the reaction O-acetyl-L-serine + hydrogen sulfide = L-cysteine + acetate. It participates in amino-acid biosynthesis; L-cysteine biosynthesis; L-cysteine from L-serine: step 2/2. In terms of biological role, catalyzes the conversion of O-acetylserine (OAS) to cysteine through the elimination of acetate and addition of hydrogen sulfide. The polypeptide is Cysteine synthase (srpG) (Synechococcus elongatus (strain ATCC 33912 / PCC 7942 / FACHB-805) (Anacystis nidulans R2)).